The primary structure comprises 74 residues: CLAVATA3/ESR (CLE)-related protein 19 (74 aa).

Positions 1 to 24 are cleaved as a signal peptide; it reads MKIKGLMILASSLLILAFIHQSES. 2 N-linked (GlcNAc...) asparagine glycosylation sites follow: Asn-34 and Asn-54. A hydroxyproline mark is found at Pro-65 and Pro-68. An O-linked (Ara...) hydroxyproline glycan is attached at Pro-68.

Belongs to the CLV3/ESR signal peptide family. In terms of processing, the O-glycosylation (arabinosylation) of the hydroxyproline Pro-68 enhances binding affinity of the CLE19p peptide for its receptor. Mostly expressed in heart-shape embryos, pollen and young flower buds, and, to a lower extent, in inflorescence, leaves and roots.

The protein resides in the secreted. It is found in the extracellular space. Extracellular signal peptide that regulates cell fate. Represses root apical meristem maintenance. The chain is CLAVATA3/ESR (CLE)-related protein 19 from Arabidopsis thaliana (Mouse-ear cress).